The chain runs to 413 residues: MITGIKGFNDILPGEVERWQHIEATARRVFGLYGYAEIRVPILEKTELFCRSIGDTTDIVEKEMYSFVDKGENAVTMRPEGTASVMRAYIEHKLYAQDPVAKLYYMGPMFRYERPQKGRYRQFHQIGAEVTGVTDPKVDAQVLTMLCHFFAELGLTEPTLQINSLGCPECRPVYREALKSFLRERLDRLCDDCKRRYETNPLRALDCKSAHCKEATADAPAMLDHLCAGCDDHFAATRRHLERAGTPYSINNRMVRGLDYYTRTTFELVTGLLGAQSAVAAGGRYDGLIADLDGPAVPGIGFAMGVERVALLLGQQEFARRPDLFIAALGTEAQDEAFRLMCGLQRLGVSVEMDYEGKSLKSQMRRSDKFNSRFTLIIGSDEMASGRATLKAMDTGTQSDVLLDPTAIAGQVK.

Belongs to the class-II aminoacyl-tRNA synthetase family. In terms of assembly, homodimer.

The protein localises to the cytoplasm. It carries out the reaction tRNA(His) + L-histidine + ATP = L-histidyl-tRNA(His) + AMP + diphosphate + H(+). This chain is Histidine--tRNA ligase, found in Geobacter metallireducens (strain ATCC 53774 / DSM 7210 / GS-15).